The primary structure comprises 999 residues: Probable hemoglobin and hemoglobin-haptoglobin-binding protein 4 (999 aa).

The first 24 residues, 1–24 (MTNFRLNVLAYSVMLGLTASVAYA), serve as a signal peptide directing secretion. Positions 25 to 52 (EPTNQPTNQPTNQPTNQPTNQPTNQNSN) are disordered. 6 consecutive repeat copies span residues 26-29 (PTNQ), 30-33 (PTNQ), 34-37 (PTNQ), 38-41 (PTNQ), 42-45 (PTNQ), and 46-49 (PTNQ). The interval 26–49 (PTNQPTNQPTNQPTNQPTNQPTNQ) is 6 X 4 AA tandem repeats of P-T-N-Q. Low complexity predominate over residues 26–50 (PTNQPTNQPTNQPTNQPTNQPTNQN). A TonB box motif is present at residues 58-65 (EQINVLGS). Positions 68 to 195 (NNDNTPPKIA…LGGAVLFETK (128 aa)) constitute a TBDR plug domain. The 797-residue stretch at 203 to 999 (EKDWHIGYKA…NYKLSAEITF (797 aa)) folds into the TBDR beta-barrel domain. The TonB C-terminal box motif lies at 982-999 (NRFYSPGRNYKLSAEITF).

This sequence belongs to the TonB-dependent receptor family. Hemoglobin/haptoglobin binding protein subfamily.

Its subcellular location is the cell outer membrane. Functionally, acts as a receptor for hemoglobin or the hemoglobin/haptoglobin complex of the human host and is required for heme uptake. The chain is Probable hemoglobin and hemoglobin-haptoglobin-binding protein 4 from Haemophilus influenzae (strain ATCC 51907 / DSM 11121 / KW20 / Rd).